Here is a 309-residue protein sequence, read N- to C-terminus: Type II methyltransferase M.HgiDI (309 aa).

An SAM-dependent MTase C5-type domain is found at 1 to 297; the sequence is MKTIDLFAGC…TSLQAYLNQP (297 aa). The active site involves C75.

The protein belongs to the class I-like SAM-binding methyltransferase superfamily. C5-methyltransferase family.

The catalysed reaction is a 2'-deoxycytidine in DNA + S-adenosyl-L-methionine = a 5-methyl-2'-deoxycytidine in DNA + S-adenosyl-L-homocysteine + H(+). Functionally, a methylase that recognizes the double-stranded sequence 5'-GRCGYC-3', methylates C-? on both strands, and protects the DNA from cleavage by the HgiDI endonuclease. The polypeptide is Type II methyltransferase M.HgiDI (Herpetosiphon aurantiacus (Herpetosiphon giganteus)).